The chain runs to 317 residues: CXXC-type zinc finger protein 5 (317 aa).

Residues 1–10 (MSSLGGGSQD) show a composition bias toward gly residues. The interval 1-92 (MSSLGGGSQD…SFGSSGGGGS (92 aa)) is disordered. Composition is skewed to low complexity over residues 11–27 (AGGSSSSSNTNSSSGSG) and 36–51 (STAVAATTAPTSVADD). A CXXC-type zinc finger spans residues 251 to 292 (GKKKRKRCGMCAPCRRRINCEQCSSCRNRKTGHQICKFRKCE). Residues 252–257 (KKKRKR) carry the Nuclear localization signal motif. Residues Cys-258, Cys-261, Cys-264, Cys-270, Cys-273, Cys-276, Cys-286, and Cys-291 each contribute to the Zn(2+) site.

As to quaternary structure, interacts with DVL1. Interacts with RBPJ.

The protein localises to the nucleus. The protein resides in the cytoplasm. Its function is as follows. May indirectly participate in activation of the NF-kappa-B and MAPK pathways. Acts as a mediator of BMP4-mediated modulation of canonical Wnt signaling activity in neural stem cells. Required for DNA damage-induced ATM phosphorylation, p53 activation and cell cycle arrest. Involved in myelopoiesis. Binds to the oxygen responsive element of COX4I2 and represses its transcription under hypoxia conditions (4% oxygen), as well as normoxia conditions (20% oxygen). May repress COX4I2 transactivation induced by CHCHD2 and RBPJ. Binds preferentially to DNA containing cytidine-phosphate-guanosine (CpG) dinucleotides over CpH (H=A, T, and C), hemimethylated-CpG and hemimethylated-hydroxymethyl-CpG. This is CXXC-type zinc finger protein 5 (Cxxc5) from Mus musculus (Mouse).